The primary structure comprises 391 residues: Succinate--CoA ligase [ADP-forming] subunit beta (391 aa).

The 238-residue stretch at 9–246 folds into the ATP-grasp domain; that stretch reads KHLFTEAGIA…LTQEDETEVR (238 aa). ATP-binding positions include Lys46, 53–55, Glu99, Leu102, and Glu107; that span reads GRG. Mg(2+) is bound by residues Asn199 and Asp213. Residues Asn266 and 323–325 contribute to the substrate site; that span reads GIV.

This sequence belongs to the succinate/malate CoA ligase beta subunit family. Heterotetramer of two alpha and two beta subunits. Mg(2+) serves as cofactor.

The catalysed reaction is succinate + ATP + CoA = succinyl-CoA + ADP + phosphate. The enzyme catalyses GTP + succinate + CoA = succinyl-CoA + GDP + phosphate. It participates in carbohydrate metabolism; tricarboxylic acid cycle; succinate from succinyl-CoA (ligase route): step 1/1. In terms of biological role, succinyl-CoA synthetase functions in the citric acid cycle (TCA), coupling the hydrolysis of succinyl-CoA to the synthesis of either ATP or GTP and thus represents the only step of substrate-level phosphorylation in the TCA. The beta subunit provides nucleotide specificity of the enzyme and binds the substrate succinate, while the binding sites for coenzyme A and phosphate are found in the alpha subunit. The polypeptide is Succinate--CoA ligase [ADP-forming] subunit beta (Halorhodospira halophila (strain DSM 244 / SL1) (Ectothiorhodospira halophila (strain DSM 244 / SL1))).